Reading from the N-terminus, the 343-residue chain is Cytoplasmic tRNA 2-thiolation protein 1 (343 aa).

It belongs to the TtcA family. CTU1/NCS6/ATPBD3 subfamily.

It localises to the cytoplasm. Its pathway is tRNA modification; 5-methoxycarbonylmethyl-2-thiouridine-tRNA biosynthesis. In terms of biological role, plays a central role in 2-thiolation of mcm(5)S(2)U at tRNA wobble positions of tRNA(Lys), tRNA(Glu) and tRNA(Gln). Directly binds tRNAs and probably acts by catalyzing adenylation of tRNAs, an intermediate required for 2-thiolation. It is unclear whether it acts as a sulfurtransferase that transfers sulfur from thiocarboxylated URM1 onto the uridine of tRNAs at wobble position. The protein is Cytoplasmic tRNA 2-thiolation protein 1 of Drosophila virilis (Fruit fly).